A 227-amino-acid polypeptide reads, in one-letter code: AN1-type zinc finger protein 3 (227 aa).

An A20-type zinc finger spans residues proline 12–proline 44. Cysteine 18, cysteine 20, cysteine 32, and cysteine 35 together coordinate Zn(2+). 2 disordered regions span residues lysine 41–cysteine 99 and proline 113–glutamine 151. 2 stretches are compositionally biased toward low complexity: residues threonine 49 to leucine 59 and serine 66 to threonine 77. Polar residues-rich tracts occupy residues leucine 78–threonine 96 and proline 113–glutamate 127. Residues arginine 135–arginine 148 are compositionally biased toward basic and acidic residues. The AN1-type zinc finger occupies glutamine 151–glycine 200. Zn(2+) is bound by residues cysteine 157, cysteine 160, cysteine 174, cysteine 176, cysteine 181, histidine 184, histidine 190, and cysteine 192.

As to expression, expressed in testis.

This Mus musculus (Mouse) protein is AN1-type zinc finger protein 3 (Zfand3).